Consider the following 694-residue polypeptide: MEDPSEEAEQPSGDPGMGMDSVEAGDTTPPTKRKSKFSALGKIFKPWKWRKKKSSDKFKETSEVLERKISMRKPREELVKRGVLLEDPEQDGEDSGKLSHAALKNGHTTPIGSARSSSPVLVEEEPERSLRNLTPEEESKKRLGSTGSQPNSEAEPGPEHAPKQPLLPPKRPLSSSCEAKEVPAGSTARSVSSTSGSTTVTSAATTAATDMTKTVKSFVGPTPAPAPAPRTLPAAPASANTAATTTAPAKQPPIPPPKPAQRNSNPIIAELSQAMNSGTVLSKPSPPLPPKRGIPSTSIPSLEPAASFTTKTANDQREKTVSLCLEPPLIIPPSSPSPPLPTHIPPEPPRSPLVPAKTFQIVPEVEFSSSSDLFQDISQQEDQKTEVPKKIQDQSFGESHIPSRLPPLPLHIRIQQALTSPLPVTPPLEGTHRAHSLLFENSDSFSEDTGTLGRTRSLPITIEMLKVPDDEEEEQTCPFVEDVTSTSATPSLPLCLREEEKESDSDSEGPIKYRDEEEDDDDDESHQSALANRVKRKDTLAMKLSSRPSEPETNLNSWPRKSKEEWNEIRHQIGNTLIRRLSQRPTAEELEQRNILQPKNEADRQAEKREIKRRLTRKLSQRPTVAELLARKILRFNEYVEVTDAHDYDRRADKPWTKLTPADKAAIRKELNEFKSSEMEVHVDSKHFTRYHRP.

2 disordered regions span residues 1–354 (MEDP…SPLV) and 375–405 (QDIS…PSRL). Over residues 45-54 (KPWKWRKKKS) the composition is skewed to basic residues. The segment covering 55–84 (SDKFKETSEVLERKISMRKPREELVKRGVL) has biased composition (basic and acidic residues). An RPEL 1 repeat occupies 63-88 (EVLERKISMRKPREELVKRGVLLEDP). 4 positions are modified to phosphoserine: Ser-116, Ser-118, Ser-129, and Ser-145. Low complexity-rich tracts occupy residues 184–209 (AGST…TAAT) and 231–249 (TLPA…TAPA). A compositionally biased stretch (pro residues) spans 250-259 (KQPPIPPPKP). Phosphoserine is present on residues Ser-264, Ser-285, Ser-335, and Ser-337. Residues 329 to 352 (LIIPPSSPSPPLPTHIPPEPPRSP) show a composition bias toward pro residues. Residues 381–392 (EDQKTEVPKKIQ) show a composition bias toward basic and acidic residues. At Ser-420 the chain carries Phosphoserine. Residue Thr-425 is modified to Phosphothreonine. Ser-436, Ser-446, Ser-457, Ser-503, Ser-505, Ser-549, and Ser-582 each carry phosphoserine. Positions 467-562 (VPDDEEEEQT…TNLNSWPRKS (96 aa)) are disordered. Positions 546–559 (SRPSEPETNLNSWP) are enriched in polar residues. 2 RPEL repeats span residues 575–600 (NTLI…QPKN) and 613–638 (RRLT…RFNE). The tract at residues 589-608 (ELEQRNILQPKNEADRQAEK) is disordered. A Phosphoserine modification is found at Ser-620.

Belongs to the phosphatase and actin regulator family. As to quaternary structure, binds PPP1CA and actin.

It is found in the cytoplasm. It localises to the cell projection. The protein resides in the lamellipodium. Its function is as follows. Regulator of protein phosphatase 1 (PP1) required for neural tube and optic fissure closure, and enteric neural crest cell (ENCCs) migration during development. Acts as an activator of PP1 by interacting with PPP1CA and preventing phosphorylation of PPP1CA at 'Thr-320'. During neural tube closure, localizes to the ventral neural tube and activates PP1, leading to down-regulate cell proliferation within cranial neural tissue and the neural retina. Also acts as a regulator of migration of enteric neural crest cells (ENCCs) by activating PP1, leading to dephosphorylation and subsequent activation of cofilin (COF1 or COF2) and repression of the integrin signaling through the RHO/ROCK pathway. The sequence is that of Phosphatase and actin regulator 4 (Phactr4) from Mus musculus (Mouse).